A 193-amino-acid polypeptide reads, in one-letter code: Peptidyl-tRNA hydrolase (193 aa).

A tRNA-binding site is contributed by Tyr17. The active-site Proton acceptor is His22. Residues Tyr68, Asn70, and Asn116 each contribute to the tRNA site.

This sequence belongs to the PTH family. In terms of assembly, monomer.

The protein resides in the cytoplasm. It carries out the reaction an N-acyl-L-alpha-aminoacyl-tRNA + H2O = an N-acyl-L-amino acid + a tRNA + H(+). In terms of biological role, hydrolyzes ribosome-free peptidyl-tRNAs (with 1 or more amino acids incorporated), which drop off the ribosome during protein synthesis, or as a result of ribosome stalling. Functionally, catalyzes the release of premature peptidyl moieties from peptidyl-tRNA molecules trapped in stalled 50S ribosomal subunits, and thus maintains levels of free tRNAs and 50S ribosomes. The polypeptide is Peptidyl-tRNA hydrolase (Acinetobacter baumannii (strain AB307-0294)).